A 319-amino-acid chain; its full sequence is mRNA decay activator protein ZFP36 (319 aa).

The interval 1–15 (MDLSAIYESLQSMSH) is necessary for nuclear export. Residues 1–92 (MDLSAIYESL…PTSPTATPTT (92 aa)) are necessary and sufficient for the association with mRNA decay enzymes and mRNA decay activation. Necessary for localization of ARE-containing mRNAs to processing bodies (PBs) stretches follow at residues 1–166 (MDLS…DLAL) and 92–319 (TSSR…SVSE). Ser-52 bears the Phosphoserine; by MAPKAPK2 mark. Ser-58 carries the phosphoserine modification. A P-P-P-P-G repeat occupies 63–67 (PPPPG). Over residues 65 to 84 (PPGFAPLAPRPGPELSPSPT) the composition is skewed to pro residues. The interval 65–95 (PPGFAPLAPRPGPELSPSPTSPTATPTTSSR) is disordered. Residues Ser-80 and Ser-82 each carry the phosphoserine modification. At Thr-84 the chain carries Phosphothreonine. Position 85 is a phosphoserine (Ser-85). Over residues 85–94 (SPTATPTTSS) the composition is skewed to low complexity. The segment at 87 to 160 (TATPTTSSRY…GSRCHFIHNP (74 aa)) is necessary for nuclear localization. A necessary for RNA-binding region spans residues 89 to 165 (TPTTSSRYKT…FIHNPTEDLA (77 aa)). 2 C3H1-type zinc fingers span residues 95-123 (RYKT…HGLG) and 133-161 (KYKT…HNPT). The segment at 95–186 (RYKTELCRTY…ISFSGLPSGR (92 aa)) is necessary for interaction with PABPN1. The segment at 166–319 (LPGQPHVLRQ…PIFNRISVSE (154 aa)) is necessary for mRNA decay activation. Ser-178 is modified (phosphoserine; by MAPKAPK2). Over residues 179-188 (FSGLPSGRRS) the composition is skewed to low complexity. Residues 179–309 (FSGLPSGRRS…PQTPAPPRRL (131 aa)) form a disordered region. Ser-189 bears the Phosphoserine mark. One copy of the P-P-P-P-G repeat lies at 190 to 194 (PPPPG). Low complexity predominate over residues 196–208 (SGPSLSSCSFSPS). Ser-210 is subject to Phosphoserine. A P-P-P-P-G repeat occupies 211–215 (PPPPG). Position 220 is a phosphoserine; by MAPK1; in vitro (Ser-220). Residue Thr-250 is modified to Phosphothreonine. Ser-269, Ser-289, and Ser-316 each carry phosphoserine. Residues 279–289 (SSGSSLGGSDS) are compositionally biased toward low complexity. The segment at 305 to 319 (PPRRLPIFNRISVSE) is interaction with CNOT1.

In terms of assembly, associates with cytoplasmic CCR4-NOT and PAN2-PAN3 deadenylase complexes to trigger ARE-containing mRNA deadenylation and decay processes. Part of a mRNA decay activation complex at least composed of poly(A)-specific exoribonucleases CNOT6, EXOSC2 and XRN1 and mRNA-decapping enzymes DCP1A and DCP2. Associates with the RNA exosome complex. Interacts (via phosphorylated form) with 14-3-3 proteins; these interactions promote exclusion of ZFP36 from cytoplasmic stress granules in response to arsenite treatment in a MAPKAPK2-dependent manner and does not prevent CCR4-NOT deadenylase complex recruitment or ZFP36-induced ARE-containing mRNA deadenylation and decay processes. Interacts with 14-3-3 proteins; these interactions occur in response to rapamycin in an Akt-dependent manner. Interacts with AGO2 and AGO4. Interacts (via C-terminus) with CNOT1; this interaction occurs in a RNA-independent manner and induces mRNA deadenylation. Interacts (via N-terminus) with CNOT6. Interacts with CNOT6L. Interacts (via C-terminus) with CNOT7; this interaction occurs in a RNA-independent manner, induces mRNA deadenylation and is inhibited in a phosphorylation MAPKAPK2-dependent manner. Interacts (via unphosphorylated form) with CNOT8; this interaction occurs in a RNA-independent manner and is inhibited in a phosphorylation MAPKAPK2-dependent manner. Interacts with DCP1A. Interacts (via N-terminus) with DCP2. Interacts with EDC3. Interacts (via N-terminus) with EXOSC2. Interacts with heat shock 70 kDa proteins. Interacts with KHSRP; this interaction increases upon cytokine-induced treatment. Interacts with MAP3K4; this interaction enhances the association with SH3KBP1/CIN85. Interacts with MAPKAPK2; this interaction occurs upon skeletal muscle satellite cell activation. Interacts with NCL. Interacts with NUP214; this interaction increases upon lipopolysaccharide (LPS) stimulation. Interacts with PABPC1; this interaction occurs in a RNA-dependent manner. Interacts (via hypophosphorylated form) with PABPN1 (via RRM domain and C-terminal arginine-rich region); this interaction occurs in the nucleus in a RNA-independent manner, decreases in presence of single-stranded poly(A) RNA-oligomer and in a p38 MAPK-dependent-manner and inhibits nuclear poly(A) tail synthesis. Interacts with PAN2. Interacts (via C3H1-type zinc finger domains) with PKM. Interacts (via C3H1-type zinc finger domains) with nuclear RNA poly(A) polymerase. Interacts with PPP2CA; this interaction occurs in LPS-stimulated cells and induces ZFP36 dephosphorylation, and hence may promote ARE-containing mRNAs decay. Interacts (via C-terminus) with PRR5L (via C-terminus); this interaction may accelerate ZFP36-mediated mRNA decay during stress. Interacts (via C-terminus) with SFN; this interaction occurs in a phosphorylation-dependent manner. Interacts (via extreme C-terminal region) with SH3KBP1/CIN85 (via SH3 domains); this interaction enhances MAP3K4-induced phosphorylation of ZFP36 at Ser-58 and Ser-85 and does not alter neither ZFP36 binding to ARE-containing transcripts nor TNF-alpha mRNA decay. Interacts with XRN1. Interacts (via C-terminus and Ser-178 phosphorylated form) with YWHAB; this interaction occurs in a p38/MAPKAPK2-dependent manner, increases cytoplasmic localization of ZFP36 and protects ZFP36 from Ser-178 dephosphorylation by serine/threonine phosphatase 2A, and hence may be crucial for stabilizing ARE-containing mRNAs. Interacts (via phosphorylated form) with YWHAE. Interacts (via C-terminus) with YWHAG; this interaction occurs in a phosphorylation-dependent manner. Interacts with YWHAH; this interaction occurs in a phosphorylation-dependent manner. Interacts with YWHAQ; this interaction occurs in a phosphorylation-dependent manner. Interacts with (via C-terminus) YWHAZ; this interaction occurs in a phosphorylation-dependent manner. Does not interact with SH3KBP1. Interacts (via the 4EHP-binding motif) with EIF4E2; the interaction is direct. Interacts (via P-P-P-P-G repeats) with GIGYF2; the interaction is direct. In terms of processing, phosphorylated. Phosphorylation at serine and/or threonine residues occurs in a p38 MAPK- and MAPKAPK2-dependent manner. Phosphorylated by MAPKAPK2 at Ser-52 and Ser-178; phosphorylation increases its stability and cytoplasmic localization, promotes binding to 14-3-3 adapter proteins and inhibits the recruitment of cytoplasmic CCR4-NOT and PAN2-PAN3 deadenylase complexes to the mRNA decay machinery, thereby inhibiting ZFP36-induced ARE-containing mRNA deadenylation and decay processes. Phosphorylation by MAPKAPK2 does not impair ARE-containing RNA-binding. Phosphorylated in a MAPKAPK2- and p38 MAPK-dependent manner upon skeletal muscle satellite cell activation; this phosphorylation inhibits ZFP36-mediated mRNA decay activity, and hence stabilizes MYOD1 mRNA. Phosphorylated by MAPK1 upon mitogen stimulation. Phosphorylated at Ser-58 and Ser-85; these phosphorylations increase in a SH3KBP1-dependent manner. Phosphorylated at serine and threonine residues in a pyruvate kinase PKM- and p38 MAPK-dependent manner. Phosphorylation at Ser-52 may participate in the PKM-mediated degradation of ZFP36 in a p38 MAPK-dependent manner. Dephosphorylated by serine/threonine phosphatase 2A at Ser-178. Ubiquitinated; pyruvate kinase (PKM)-dependent ubiquitination leads to proteasomal degradation through a p38 MAPK signaling pathway. As to expression, expressed in skeletal muscle satellite cells. Strongly expressed in differentiated adipocytes compared to preadipocytes (at protein level). Expressed in embryonic stem cells (ESCs). Expressed in heart, placenta, kidney, intestine, liver, lung, thymus, fat and spleen.

It is found in the nucleus. It localises to the cytoplasm. Its subcellular location is the cytoplasmic granule. The protein localises to the P-body. Its function is as follows. Zinc-finger RNA-binding protein that destabilizes numerous cytoplasmic AU-rich element (ARE)-containing mRNA transcripts by promoting their poly(A) tail removal or deadenylation, and hence provide a mechanism for attenuating protein synthesis. Acts as an 3'-untranslated region (UTR) ARE mRNA-binding adapter protein to communicate signaling events to the mRNA decay machinery. Recruits deadenylase CNOT7 (and probably the CCR4-NOT complex) via association with CNOT1, and hence promotes ARE-mediated mRNA deadenylation. Also functions by recruiting components of the cytoplasmic RNA decay machinery to the bound ARE-containing mRNAs. Self-regulates by destabilizing its own mRNA. Binds to 3'-UTR ARE of numerous mRNAs and of its own mRNA. Plays a role in anti-inflammatory responses; suppresses tumor necrosis factor (TNF)-alpha production by stimulating ARE-mediated TNF-alpha mRNA decay and several other inflammatory ARE-containing mRNAs in interferon (IFN)- and/or lipopolysaccharide (LPS)-induced macrophages. Also plays a role in the regulation of dendritic cell maturation at the post-transcriptional level, and hence operates as part of a negative feedback loop to limit the inflammatory response. Promotes ARE-mediated mRNA decay of hypoxia-inducible factor HIF1A mRNA during the response of endothelial cells to hypoxia. Positively regulates early adipogenesis of preadipocytes by promoting ARE-mediated mRNA decay of immediate early genes (IEGs). Negatively regulates hematopoietic/erythroid cell differentiation by promoting ARE-mediated mRNA decay of the transcription factor STAT5B mRNA. Plays a role in maintaining skeletal muscle satellite cell quiescence by promoting ARE-mediated mRNA decay of the myogenic determination factor MYOD1 mRNA. Also associates with and regulates the expression of non-ARE-containing target mRNAs at the post-transcriptional level, such as MHC class I mRNAs. Participates in association with argonaute RISC catalytic components in the ARE-mediated mRNA decay mechanism; assists microRNA (miRNA) targeting ARE-containing mRNAs. May also play a role in the regulation of cytoplasmic mRNA decapping; enhances decapping of ARE-containing RNAs, in vitro. Involved in the delivery of target ARE-mRNAs to processing bodies (PBs). In addition to its cytosolic mRNA-decay function, affects nuclear pre-mRNA processing. Negatively regulates nuclear poly(A)-binding protein PABPN1-stimulated polyadenylation activity on ARE-containing pre-mRNA during LPS-stimulated macrophages. Also involved in the regulation of stress granule (SG) and P-body (PB) formation and fusion. Plays a role in the regulation of keratinocyte proliferation, differentiation and apoptosis. Plays a role as a tumor suppressor by inhibiting cell proliferation in breast cancer cells. The protein is mRNA decay activator protein ZFP36 of Mus musculus (Mouse).